Reading from the N-terminus, the 365-residue chain is GDSL esterase/lipase At3g62280 (365 aa).

Positions 1–25 (MDYTVSSLQCFFLVLCLSLLVCSNS) are cleaved as a signal peptide. Ser43 functions as the Nucleophile in the catalytic mechanism. Residues Asn137, Asn178, and Asn231 are each glycosylated (N-linked (GlcNAc...) asparagine). Residues Asp333 and His336 contribute to the active site.

The protein belongs to the 'GDSL' lipolytic enzyme family.

It is found in the secreted. This Arabidopsis thaliana (Mouse-ear cress) protein is GDSL esterase/lipase At3g62280.